A 180-amino-acid chain; its full sequence is MRFFVFTCLLAVALAKNGIEQRSASEEIVSFYQEKYKQDSNAAIYPTNQETPSVSSSEESVEVQTEKDEQIEEENVYLKQLKRIKQIFQKFYIPQYPEVYQQQIVMNPWKHVKTTTYPVPIPETTRIPLEEIVKKIVEMIKFNQLHQFVIPQYVQALQQRIAMNPWHHVTPFRSFPVLNF.

Positions 1–15 (MRFFVFTCLLAVALA) are cleaved as a signal peptide. 2 positions are modified to phosphoserine: serine 23 and serine 25. A disordered region spans residues 46-66 (PTNQETPSVSSSEESVEVQTE).

Belongs to the alpha-casein family. In terms of tissue distribution, mammary gland specific. Secreted in milk.

Its subcellular location is the secreted. In terms of biological role, important role in the capacity of milk to transport calcium phosphate. In Oryctolagus cuniculus (Rabbit), this protein is Alpha-S2-casein-like A (CSN1S2A).